The following is a 279-amino-acid chain: Diaminopimelate epimerase 1 (279 aa).

The substrate site is built by Asn13 and Asn66. The Proton donor role is filled by Cys75. Substrate is bound by residues 76-77 (GN), Asn164, Asn197, and 215-216 (ER). Residue Cys224 is the Proton acceptor of the active site. 225 to 226 (GT) is a binding site for substrate.

It belongs to the diaminopimelate epimerase family. In terms of assembly, homodimer.

Its subcellular location is the cytoplasm. It carries out the reaction (2S,6S)-2,6-diaminopimelate = meso-2,6-diaminopimelate. Its pathway is amino-acid biosynthesis; L-lysine biosynthesis via DAP pathway; DL-2,6-diaminopimelate from LL-2,6-diaminopimelate: step 1/1. Catalyzes the stereoinversion of LL-2,6-diaminopimelate (L,L-DAP) to meso-diaminopimelate (meso-DAP), a precursor of L-lysine and an essential component of the bacterial peptidoglycan. The chain is Diaminopimelate epimerase 1 from Nostoc sp. (strain PCC 7120 / SAG 25.82 / UTEX 2576).